Reading from the N-terminus, the 314-residue chain is MIEIEKPRIETIEISEDAKFGKFVVEPLERGYGTTLGNSLRRILLSSLSGAAVKYIEIEGVLHEFSAVDNVVEDVSTIIMNIKQLALKIYSEEDKTLEIDVRDEGEVTASDITHDSDVEILNPELKIATVSKGGHLKIRLVANKGRGYALAEQNNTSDLPIGVIPVDSLYSPVERVNYTVENTRVGQSSDFDKLTLDVWTNGSITPQESVSLAAKIMTEHLNIFVGLTDEAQNAEIMIEKEEDQKEKVLEMSIEELDLSVRSYNCLKRAGINSVQELADKSEADMMKVRNLGRKSLEEVKYKLEDLGLGLRKED.

Positions 1-228 (MIEIEKPRIE…EHLNIFVGLT (228 aa)) are alpha N-terminal domain (alpha-NTD). The tract at residues 245-314 (KEKVLEMSIE…DLGLGLRKED (70 aa)) is alpha C-terminal domain (alpha-CTD).

Belongs to the RNA polymerase alpha chain family. In terms of assembly, homodimer. The RNAP catalytic core consists of 2 alpha, 1 beta, 1 beta' and 1 omega subunit. When a sigma factor is associated with the core the holoenzyme is formed, which can initiate transcription.

The enzyme catalyses RNA(n) + a ribonucleoside 5'-triphosphate = RNA(n+1) + diphosphate. Its function is as follows. DNA-dependent RNA polymerase catalyzes the transcription of DNA into RNA using the four ribonucleoside triphosphates as substrates. This Staphylococcus aureus (strain bovine RF122 / ET3-1) protein is DNA-directed RNA polymerase subunit alpha.